The sequence spans 118 residues: uncharacterized protein (118 aa).

This is an uncharacterized protein from Caenorhabditis elegans.